Here is a 702-residue protein sequence, read N- to C-terminus: Cytolytic toxin-beta (702 aa).

A structural MACPF/CDC pore-forming domain region spans residues Pro-2–Ser-264. Residues Asn-94, Asn-101, and Asn-286 are each glycosylated (N-linked (GlcNAc...) asparagine). Residues Thr-265–Val-387 are structural FAT domain. The segment at Val-388–Gln-515 is thioredoxin (THX) domain. Positions Ser-504–Glu-702 constitute a B30.2/SPRY domain.

It belongs to the SNTX/VTX toxin family. Heterodimer of alpha and beta subunits; non-covalently linked. Also associates into tetramers or even higher aggregates. In terms of processing, intrachain disulfide bonds may be present in the heterodimer. Expressed by the venom gland.

It is found in the secreted. This heterodimer induces potent hemolytic activities (when tested on rabbit erythrocytes, EC(50)=25-56 ng/mL) due to its ability to form pores in the cell membrane. The pore may be composed of 10 alpha/beta heterodimers. The toxin shows cardiovascular effects that include a vasorelaxant action that may involve the L-arginine-nitric oxid synthase pathway. In addition, it displays edema-inducing activities, increases vascular permeability. It also shows myotoxic activities and interferes irreversibly with neuromuscular function. It also induces irreversible platelet aggregation in rabbit or rat (but not in human or mouse) whole blood. In addition, it has been observed to increase spontaneous quantal acetylcholine release from isolated frog cutaneous pectoris motor endings. This chain is Cytolytic toxin-beta, found in Scorpaena plumieri (Spotted scorpionfish).